The sequence spans 399 residues: Pre-mycofactocin synthase (399 aa).

The 383-residue stretch at 4-386 folds into the FMN hydroxy acid dehydrogenase domain; the sequence is ARDIWFETVA…VPEDILVPEG (383 aa). FMN-binding residues include serine 111 and glutamine 131. Tyrosine 133 lines the a 2-oxocarboxylate pocket. Threonine 159 is a binding site for FMN. Arginine 168 is a binding site for a 2-oxocarboxylate. Lysine 257 contributes to the FMN binding site. The active-site Proton acceptor is the histidine 281. FMN-binding positions include 312-316 and 335-336; these read DGGIR and GR.

Belongs to the FMN-dependent alpha-hydroxy acid dehydrogenase family. The cofactor is FMN.

The catalysed reaction is 3-amino-5-[(4-hydroxyphenyl)methyl]-4,4-dimethyl-2-pyrrolidin-2-one + O2 + H2O = pre-mycofactocin + H2O2 + NH4(+). Involved in the biosynthesis of the enzyme cofactor mycofactocin (MFT). Catalyzes the oxidative deamination of AHDP (3-amino-5-[(4-hydroxyphenyl)methyl]-4,4-dimethyl-2-pyrrolidin-2-one), forming an alpha-keto amide moiety on the resulting molecule, which is called pre-mycofactocin (PMFT). This reaction occurs via a 5-[(4-hydroxyphenyl)methyl]-3-imino-4,4-dimethylpyrrolidin-2-one intermediate, which converts to PMFT. The alpha-keto amide moiety is the redox-active center for the redox activity of mycofactocin. Is required for the in vivo ethanol assimilation in M.smegmatis. The polypeptide is Pre-mycofactocin synthase (Mycolicibacterium smegmatis (strain ATCC 700084 / mc(2)155) (Mycobacterium smegmatis)).